A 796-amino-acid polypeptide reads, in one-letter code: MDELAGGGGGGQGMAAPPRPQQGPGGNLSLPPGANGAPGGGGPPAAEAAGPPAGPELSRPQQYTIPGILHYIQHEWARFEMERAHWEVERAELQARIAFLQGERKGQENLKKDLVRRIKMLEYALKQERAKYHKLKYGTELNQGDLKMPTFESEETKDVEAPPAPQNSQLTWKQGRQLLRQYLQEVGYTDTILDVRSQRVRSLLGLSNSEPNGSVEAKNLEQILNGGESPKQKGQEIKRPPGDVLETFNFLENADDSDEEENDMIEGIPEGKDKLRIHKHKIGNEGLAADLTDDPDTEEALKEFDFLVTAEDGEGAGEARSSGDGTEWDKDDLSPTAEVWDVDQGLISKLKEQYKKERKGKKGVKRVNRTNLCDMITDLGDDELPHIPSGIINQSRSASTRMADHEGARAEEAEPITFPSGGGKSFIMGSDDVLLSVLGLGDLADLTVTNDADYSYDLPANKDAFRKTWNPKYTLRSHFDGVRALAFHPVEPVLVTASEDHTLKLWNLQKTVPAKKSASLDVEPIYTFRAHIGPVLSLAISSNGEQCFSGGIDATIQWWNMPSPNVDPYDTYESNVLAGTLVAHTDAVWGLAYSGIKNQLLSCSADGTIRLWNPQEKLPCVCTYNGDKEHGIPTSVDFIGCDPAHMVTSFNTGSAVIYDLETSQSLVMLSSQVDSGLQSSNHINRVVSHPTLPVTITAHEDRHIKFFDNKTGKMIHSMVAHLDAVTSLAVDPNGIYLMSGSHDCSIRLWNLDSKTCVQEITAHRKKLDESIYDVAFHPSKAYIASAGADALAKVFV.

At methionine 1 the chain carries N-acetylmethionine. Positions 1-13 (MDELAGGGGGGQG) are enriched in gly residues. The interval 1-60 (MDELAGGGGGGQGMAAPPRPQQGPGGNLSLPPGANGAPGGGGPPAAEAAGPPAGPELSRP) is disordered. The segment at 71 to 79 (YIQHEWARF) is caveolin-binding. Residues 77–136 (ARFEMERAHWEVERAELQARIAFLQGERKGQENLKKDLVRRIKMLEYALKQERAKYHKLK) adopt a coiled-coil conformation. Position 150 is a phosphothreonine (threonine 150). The tract at residues 166–183 (QNSQLTWKQGRQLLRQYL) is calmodulin-binding. A phosphoserine mark is found at serine 202, serine 214, serine 229, serine 257, and serine 334. 2 disordered regions span residues 252 to 271 (ENADDSDEEENDMIEGIPEG) and 311 to 335 (EDGEGAGEARSSGDGTEWDKDDLSP). The span at 253-264 (NADDSDEEENDM) shows a compositional bias: acidic residues. WD repeat units follow at residues 477–516 (SHFDGVRALAFHPVEPVLVTASEDHTLKLWNLQKTVPAKK), 530–569 (AHIGPVLSLAISSNGEQCFSGGIDATIQWWNMPSPNVDPY), 583–622 (AHTDAVWGLAYSGIKNQLLSCSADGTIRLWNPQEKLPCVC), 678–717 (QSSNHINRVVSHPTLPVTITAHEDRHIKFFDNKTGKMIHS), 720–759 (AHLDAVTSLAVDPNGIYLMSGSHDCSIRLWNLDSKTCVQE), and 766–795 (KLDESIYDVAFHPSKAYIASAGADALAKVF).

This sequence belongs to the WD repeat striatin family. As to quaternary structure, tetramerizes. Part of the core of STRIPAK complexes composed of PP2A catalytic and scaffolding subunits, the striatins (PP2A regulatory subunits), the striatin-associated proteins MOB4, STRIP1 and STRIP2, PDCD10 and members of the STE20 kinases, such as STK24 and STK26. The STRIPAK complex can be extended by adapter proteins such as SLMAP:SIKE1 or CTTNBP2NL. Interacts with CDC42BPB. In terms of tissue distribution, mainly expressed in the brain and muscles but is also detected at low levels in various tissues such as kidney, spleen and lung.

It localises to the cytoplasm. The protein resides in the membrane. In terms of biological role, calmodulin-binding scaffolding protein which is the center of the striatin-interacting phosphatase and kinase (STRIPAK) complexes. STRIPAK complexes have critical roles in protein (de)phosphorylation and are regulators of multiple signaling pathways including Hippo, MAPK, nuclear receptor and cytoskeleton remodeling. Different types of STRIPAK complexes are involved in a variety of biological processes such as cell growth, differentiation, apoptosis, metabolism and immune regulation. The protein is Striatin-3 (Strn3) of Mus musculus (Mouse).